Reading from the N-terminus, the 214-residue chain is Nucleoside triphosphate pyrophosphatase (214 aa).

The active-site Proton acceptor is the aspartate 79.

This sequence belongs to the Maf family. It depends on a divalent metal cation as a cofactor.

It is found in the cytoplasm. It carries out the reaction a ribonucleoside 5'-triphosphate + H2O = a ribonucleoside 5'-phosphate + diphosphate + H(+). It catalyses the reaction a 2'-deoxyribonucleoside 5'-triphosphate + H2O = a 2'-deoxyribonucleoside 5'-phosphate + diphosphate + H(+). Its function is as follows. Nucleoside triphosphate pyrophosphatase. May have a dual role in cell division arrest and in preventing the incorporation of modified nucleotides into cellular nucleic acids. The protein is Nucleoside triphosphate pyrophosphatase of Rhodococcus opacus (strain B4).